Consider the following 421-residue polypeptide: UPF0229 protein lpp2857 (421 aa).

Residues 83 to 110 form a disordered region; sequence IAGDRIKRPSGGGAGGAGGNASDSGEGE. Over residues 92-101 the composition is skewed to gly residues; it reads SGGGAGGAGG.

It belongs to the UPF0229 family.

The protein is UPF0229 protein lpp2857 of Legionella pneumophila (strain Paris).